Consider the following 760-residue polypeptide: Serine/threonine-protein kinase Haspin homolog ALK1 (760 aa).

Phosphoserine occurs at positions 76 and 79. Disordered stretches follow at residues 76 to 100 (SDASLNVTTGNNTSRKTTSNSKKRW), 123 to 153 (SSFTSESHKDRESRNVLQQKRKSLQSYSSLD), 187 to 264 (DDIS…STVS), and 362 to 408 (KRNS…CSYS). The span at 78-95 (ASLNVTTGNNTSRKTTSN) shows a compositional bias: polar residues. The KEN box motif lies at 200–202 (KEN). Residues 209–220 (KKNSSIASTSSE) are compositionally biased toward polar residues. Positions 224 to 232 (RTPLKPLVN) match the D box motif. The segment covering 237 to 250 (PTSQPQQQQPLYNA) has biased composition (polar residues). Residues 251–264 (SLSSRRSSISSTVS) are compositionally biased toward low complexity. A compositionally biased stretch (basic residues) spans 362-386 (KRNSQSSLKHKSSHASLQKFKRNKG). Positions 398-408 (NSSNDDSCSYS) are enriched in low complexity. In terms of domain architecture, Protein kinase spans 468 to 760 (NCDIKRILNP…NTGDLLKLYK (293 aa)). ATP contacts are provided by residues 474-482 (ILNPAKGDV) and Lys-510.

It belongs to the protein kinase superfamily. Ser/Thr protein kinase family. Haspin subfamily. Post-translationally, periodically phosphorylated during the cell cycle with a phosphorylation peak during mitosis and hyperphosphorylated after DNA damage.

It carries out the reaction L-seryl-[protein] + ATP = O-phospho-L-seryl-[protein] + ADP + H(+). The enzyme catalyses L-threonyl-[protein] + ATP = O-phospho-L-threonyl-[protein] + ADP + H(+). Functionally, serine/threonine haspin-like protein kinase involved in cell cycle regulation. In Saccharomyces cerevisiae (strain ATCC 204508 / S288c) (Baker's yeast), this protein is Serine/threonine-protein kinase Haspin homolog ALK1 (ALK1).